We begin with the raw amino-acid sequence, 1013 residues long: RNA-binding protein 44 (1013 aa).

Disordered stretches follow at residues 1 to 25 and 56 to 94; these read MQAT…FQND and LATE…IFSQ. A compositionally biased stretch (basic and acidic residues) spans 56 to 76; that stretch reads LATEERASDKENSIVDQRDLS. The span at 78-94 shows a compositional bias: polar residues; sequence LSFSENQDSNRGNIFSQ. Phosphoserine is present on residues serine 365, serine 368, serine 510, serine 681, and serine 688. Positions 792 to 865 constitute an RRM domain; sequence FLIHVGGLCP…KSVTVRLVKI (74 aa). The tract at residues 905–925 is disordered; sequence RAKSRQLESEQDSEFPPLDQG.

In terms of assembly, homodimer. Interacts with TEX14. In terms of tissue distribution, highly expressed in testis. Also expressed in other tissues at lower level.

It localises to the cytoplasm. Its function is as follows. Component of intercellular bridges during meiosis. Intercellular bridges are evolutionarily conserved structures that connect differentiating germ cells. Not required for fertility. The protein is RNA-binding protein 44 (Rbm44) of Mus musculus (Mouse).